A 227-amino-acid chain; its full sequence is MNVVYKGKTKDVFLLEDGNYLLKFKDDVTGENGVFDPGANSVGLTMEGAGRAALRLTKLFFERLKEEKIPTHYIDSNVEEGTMKVKPAKIFGNGLEVICRYRAVGSFMRRYGMYAKEGQVLDAFVEVTLKDDERQDPPITKDALDMLGILSLREYDILKDLTKKISGIVKDELSKKGIELYDIKLEFGRIDEDNHIALIDEISGGNMRAYKDGEYIEPLDLEKLIIE.

The protein belongs to the SAICAR synthetase family.

The enzyme catalyses 5-amino-1-(5-phospho-D-ribosyl)imidazole-4-carboxylate + L-aspartate + ATP = (2S)-2-[5-amino-1-(5-phospho-beta-D-ribosyl)imidazole-4-carboxamido]succinate + ADP + phosphate + 2 H(+). It participates in purine metabolism; IMP biosynthesis via de novo pathway; 5-amino-1-(5-phospho-D-ribosyl)imidazole-4-carboxamide from 5-amino-1-(5-phospho-D-ribosyl)imidazole-4-carboxylate: step 1/2. The polypeptide is Phosphoribosylaminoimidazole-succinocarboxamide synthase (Clostridium tetani (strain Massachusetts / E88)).